We begin with the raw amino-acid sequence, 125 residues long: Protein ApaG (125 aa).

One can recognise an ApaG domain in the interval 1-125; it reads MINSPRVCVQ…FRLAIPSLIN (125 aa).

The polypeptide is Protein ApaG (Sodalis glossinidius (strain morsitans)).